The following is a 238-amino-acid chain: Small ribosomal subunit protein uS2 (238 aa).

Belongs to the universal ribosomal protein uS2 family.

In Synechococcus sp. (strain CC9311), this protein is Small ribosomal subunit protein uS2.